A 602-amino-acid polypeptide reads, in one-letter code: MFS-type efflux transporter pyiT (602 aa).

The tract at residues 1–33 (MEKAKDSLPTTGDPVPSQGTINPVDETGGSASD) is disordered. 7 consecutive transmembrane segments (helical) span residues 43 to 63 (FWFT…EGSV), 123 to 143 (WLTI…GGAT), 156 to 176 (GLGS…LLPL), 185 to 205 (IIFM…GILV), 212 to 232 (WVFY…FFFL), 251 to 271 (FFGN…LTYG), and 282 to 302 (IIVS…FEAS). The N-linked (GlcNAc...) asparagine glycan is linked to Asn317. A run of 6 helical transmembrane segments spans residues 325-345 (IATF…PLYF), 357-377 (GVML…GGAL), 386-406 (NIHF…TILN), 410-430 (SLAV…VPTA), 451-471 (TFAF…AAIF), and 524-544 (LERV…VIFL). Polar residues predominate over residues 564–585 (IPQTAADNSASRPNTINDTASQ). Positions 564-602 (IPQTAADNSASRPNTINDTASQAPILKQRRSTNQERETV) are disordered. N-linked (GlcNAc...) asparagine glycosylation is present at Asn580.

The protein belongs to the major facilitator superfamily.

It is found in the cell membrane. Functionally, MFS-type efflux transporter; part of the gene cluster that mediates the biosynthesis of the mycotoxin pyrichalasin H, a tyrosine-derived cytochalasan that inhibits the growth of rice seedlings, but also inhibits lymphocyte capping and actin polymerization and alters cell morphology. Pyrichalasin H is indicated as the responsible agent for the genus-specific pathogenicity of M.grisea toward crabgrass. PyiT might be involved in the excretion of pyrichalasin H. This is MFS-type efflux transporter pyiT from Pyricularia grisea (Crabgrass-specific blast fungus).